A 287-amino-acid polypeptide reads, in one-letter code: tRNA-cytidine(32) 2-sulfurtransferase (287 aa).

Residues 58–63 (SGGKDS) carry the PP-loop motif motif. [4Fe-4S] cluster contacts are provided by Cys-133, Cys-136, and Cys-224.

Belongs to the TtcA family. In terms of assembly, homodimer. It depends on Mg(2+) as a cofactor. Requires [4Fe-4S] cluster as cofactor.

It is found in the cytoplasm. The catalysed reaction is cytidine(32) in tRNA + S-sulfanyl-L-cysteinyl-[cysteine desulfurase] + AH2 + ATP = 2-thiocytidine(32) in tRNA + L-cysteinyl-[cysteine desulfurase] + A + AMP + diphosphate + H(+). It participates in tRNA modification. Its function is as follows. Catalyzes the ATP-dependent 2-thiolation of cytidine in position 32 of tRNA, to form 2-thiocytidine (s(2)C32). The sulfur atoms are provided by the cysteine/cysteine desulfurase (IscS) system. This Dinoroseobacter shibae (strain DSM 16493 / NCIMB 14021 / DFL 12) protein is tRNA-cytidine(32) 2-sulfurtransferase.